The sequence spans 410 residues: G-protein coupled receptor family C group 5 member B (410 aa).

A signal peptide spans 1–28 (MFLVLERKMRTHQVFPLPLLLVIASVAS). The Extracellular portion of the chain corresponds to 29-56 (ENASTSRGCGLDLLPQYVSLCDLDAIWG). Residue asparagine 30 is glycosylated (N-linked (GlcNAc...) asparagine). A helical transmembrane segment spans residues 57 to 77 (IVVEAVAGAGALITLLLMLIL). At 78 to 94 (LVRLPFIKDKERKRPVC) the chain is on the cytoplasmic side. The chain crosses the membrane as a helical span at residues 95–115 (LHFLFLLGTLGLFGLTFAFII). The Extracellular portion of the chain corresponds to 116–126 (QMDETICSIRR). A helical membrane pass occupies residues 127-147 (FLWGVLFALCFSCLLSQAWRV). Residues 148 to 164 (RRLVRQGTSPASWQLVS) lie on the Cytoplasmic side of the membrane. The helical transmembrane segment at 165-185 (LALCLMLVQVIIATEWLVLTV) threads the bilayer. Residues 186–199 (LRDTKPACAYEPMD) are Extracellular-facing. A helical membrane pass occupies residues 200 to 220 (FVMALIYDMVLLAITLAQSLF). Topologically, residues 221 to 234 (TLCGKFKRWKVNGA) are cytoplasmic. The helical transmembrane segment at 235-255 (FILVTTFLSALIWVVWMTMYL) threads the bilayer. Residues 256–271 (FGNSLIKQGDAWSDPT) lie on the Extracellular side of the membrane. Residues 272–292 (LAITLAASGWVFVIFHAIPEI) traverse the membrane as a helical segment. Topologically, residues 293-410 (HYTLLPPLQE…PPSHTGRHHW (118 aa)) are cytoplasmic. At serine 355 the chain carries Phosphoserine. The tract at residues 356 to 381 (LEQRSSSLGKKPSSLGNRPSAPFRSN) is disordered. The segment covering 360–371 (SSSLGKKPSSLG) has biased composition (low complexity).

It belongs to the G-protein coupled receptor 3 family.

It is found in the cell membrane. It localises to the cytoplasmic vesicle membrane. G-protein coupled receptor involved in the regulation of cell volume. The protein is G-protein coupled receptor family C group 5 member B (Gprc5b) of Mus musculus (Mouse).